The following is a 1321-amino-acid chain: C-Jun-amino-terminal kinase-interacting protein 4 (1321 aa).

Met-1 is subject to N-acetylmethionine. The region spanning 7 to 95 (VVYQEEPGGS…ITQYEREKAL (89 aa)) is the RH1 domain. A coiled-coil region spans residues 66-166 (AQDQEHQVEL…NALHQRHTEM (101 aa)). 5 positions are modified to phosphoserine: Ser-109, Ser-183, Ser-185, Ser-194, and Ser-203. Residues 203–308 (SLGIFPLPAG…EGFVKGTDTS (106 aa)) are disordered. A Phosphothreonine modification is found at Thr-217. Residues 236 to 248 (ELSQPRSHTSLKV) are compositionally biased toward polar residues. Ser-238, Ser-251, Ser-265, Ser-268, and Ser-272 each carry phosphoserine. Positions 266–285 (DISQGGSKATTPASTANSDV) are enriched in polar residues. Thr-292 bears the Phosphothreonine mark. Phosphoserine occurs at positions 311, 329, 332, and 347. Positions 322–332 (AQETRNVSTES) are enriched in polar residues. Residues 322–341 (AQETRNVSTESGENEEKSEV) form a disordered region. A phosphothreonine mark is found at Thr-348, Thr-365, and Thr-418. Positions 408-534 (REVENLILEN…LQEAVRWTEM (127 aa)) form a coiled coil. The span at 473 to 489 (LRKARAEAEDARQKAKD) shows a compositional bias: basic and acidic residues. Disordered regions lie at residues 473 to 500 (LRKA…TAQR) and 563 to 600 (SSNA…SQLP). The 105-residue stretch at 500–604 (RKRFTRVEMA…TLSQLPGDKS (105 aa)) folds into the RH2 domain. Thr-586 is modified (phosphothreonine). At Ser-588 the chain carries Phosphoserine. A Phosphothreonine modification is found at Thr-595. Phosphoserine occurs at positions 705, 728, 730, 732, and 733. A coiled-coil region spans residues 724-758 (SKQRSASQSSLDKLDQELKEQQKEFKNQEELSSQV). The tract at residues 853-883 (TGAATSPSTNGASPVIEKPPEMETENSEVDE) is disordered. Positions 855–864 (AATSPSTNGA) are enriched in polar residues. Over residues 874-883 (METENSEVDE) the composition is skewed to acidic residues. At Ser-1188 the chain carries Phosphoserine. The disordered stretch occupies residues 1239 to 1267 (PQSSSGGADLTADKAGSSAQEPSSQTPLK). Residues 1255–1266 (SSAQEPSSQTPL) are compositionally biased toward polar residues. Phosphothreonine is present on Thr-1264.

It belongs to the JIP scaffold family. As to quaternary structure, homodimer. The homodimer interacts with ARF6, forming a heterotetramer. Homooligomer. Interacts with MAX, MAPK8, MAPK14, MAP3K3, MYC, and MAP2K4. Interacts with KNS2. Interaction with KNS2 is important in the formation of ternary complex with MAPK8. Interacts with PIP4P1. Interacts with PIKFYVE. Phosphorylated by MAPK8 and MAPK14. Highly expressed in brain, kidney, liver, heart.

The protein localises to the cytoplasm. Its subcellular location is the perinuclear region. It localises to the lysosome membrane. The JNK-interacting protein (JIP) group of scaffold proteins selectively mediates JNK signaling by aggregating specific components of the MAPK cascade to form a functional JNK signaling module. Regulates lysosomal positioning by acting as an adapter protein which links PIP4P1-positive lysosomes to the dynein-dynactin complex. Assists PIKFYVE selective functionality in microtubule-based endosome-to-TGN trafficking. This Mus musculus (Mouse) protein is C-Jun-amino-terminal kinase-interacting protein 4.